The chain runs to 37 residues: Large ribosomal subunit protein bL36c (37 aa).

This sequence belongs to the bacterial ribosomal protein bL36 family.

The protein localises to the plastid. Its subcellular location is the chloroplast. The sequence is that of Large ribosomal subunit protein bL36c from Phaeodactylum tricornutum (strain CCAP 1055/1).